The chain runs to 123 residues: Undecaprenol kinase (123 aa).

Over 1–33 (MDSKDHRNELNRFFKSFVHAGRGIWETARTERN) the chain is Cytoplasmic. Residues 34–51 (FQFHAAAACAVLICGFLV) form a helical membrane-spanning segment. At 52-57 (ELSIIE) the chain is on the extracellular side. Residues 58–74 (WMIIFLLIGGMFSLELL) traverse the membrane as a helical segment. Topologically, residues 75 to 99 (NTAIEHTVDLITDKHHPLAKAAKDA) are cytoplasmic. The helical transmembrane segment at 100–120 (AAGAVCVFAVISCIIGLLIFL) threads the bilayer. Over 121 to 123 (PKL) the chain is Extracellular.

This sequence belongs to the bacterial diacylglycerol kinase family.

It localises to the cell membrane. It carries out the reaction di-trans,octa-cis-undecaprenol + ATP = di-trans,octa-cis-undecaprenyl phosphate + ADP + H(+). Functionally, catalyzes the phosphorylation of undecaprenol in vitro, which is probably the physiological substrate. Exhibits no detectable activity against other substrates such as monoacylglycerol, ceramide, or diacylglycerol (DAG). Appears indispensable for the maintenance of spore stability and viability in B.subtilis. This is Undecaprenol kinase (dgkA) from Bacillus subtilis (strain 168).